The primary structure comprises 424 residues: uncharacterized protein (424 aa).

Lys259 carries the post-translational modification N6-(pyridoxal phosphate)lysine.

This sequence belongs to the class-III pyridoxal-phosphate-dependent aminotransferase family. Requires pyridoxal 5'-phosphate as cofactor.

This is an uncharacterized protein from Archaeoglobus fulgidus (strain ATCC 49558 / DSM 4304 / JCM 9628 / NBRC 100126 / VC-16).